The sequence spans 273 residues: Putative phosphoenolpyruvate synthase regulatory protein (273 aa).

ADP is bound at residue 153 to 160; that stretch reads AVSRAGKT.

This sequence belongs to the pyruvate, phosphate/water dikinase regulatory protein family. PSRP subfamily.

It carries out the reaction [pyruvate, water dikinase] + ADP = [pyruvate, water dikinase]-phosphate + AMP + H(+). It catalyses the reaction [pyruvate, water dikinase]-phosphate + phosphate + H(+) = [pyruvate, water dikinase] + diphosphate. Its function is as follows. Bifunctional serine/threonine kinase and phosphorylase involved in the regulation of the phosphoenolpyruvate synthase (PEPS) by catalyzing its phosphorylation/dephosphorylation. The protein is Putative phosphoenolpyruvate synthase regulatory protein of Stenotrophomonas maltophilia (strain R551-3).